The sequence spans 177 residues: Antigen TpF1 (177 aa).

The protein belongs to the Dps family. As to quaternary structure, homodecamer; either linked or stabilized by disulfide bonds.

In terms of biological role, may play an important structural role in the outer membrane. This chain is Antigen TpF1 (tpf1), found in Treponema pallidum (strain Nichols).